We begin with the raw amino-acid sequence, 282 residues long: Acetyl-coenzyme A carboxylase carboxyl transferase subunit beta 1 (282 aa).

One can recognise a CoA carboxyltransferase N-terminal domain in the interval 23 to 282 (LMTKCPECRH…MHTKGGVQHV (260 aa)). Residues Cys27, Cys30, Cys46, and Cys49 each contribute to the Zn(2+) site. A C4-type zinc finger spans residues 27-49 (CPECRHILLTKELEKNHKVCTKC).

This sequence belongs to the AccD/PCCB family. In terms of assembly, acetyl-CoA carboxylase is a heterohexamer composed of biotin carboxyl carrier protein (AccB), biotin carboxylase (AccC) and two subunits each of ACCase subunit alpha (AccA) and ACCase subunit beta (AccD). The cofactor is Zn(2+).

Its subcellular location is the cytoplasm. It carries out the reaction N(6)-carboxybiotinyl-L-lysyl-[protein] + acetyl-CoA = N(6)-biotinyl-L-lysyl-[protein] + malonyl-CoA. It functions in the pathway lipid metabolism; malonyl-CoA biosynthesis; malonyl-CoA from acetyl-CoA: step 1/1. In terms of biological role, component of the acetyl coenzyme A carboxylase (ACC) complex. Biotin carboxylase (BC) catalyzes the carboxylation of biotin on its carrier protein (BCCP) and then the CO(2) group is transferred by the transcarboxylase to acetyl-CoA to form malonyl-CoA. This is Acetyl-coenzyme A carboxylase carboxyl transferase subunit beta 1 from Lysinibacillus sphaericus (strain C3-41).